The following is a 299-amino-acid chain: Glutamyl-Q tRNA(Asp) synthetase (299 aa).

L-glutamate contacts are provided by residues 18–22 (RFAPS) and E54. The short motif at 21 to 31 (PSPSGALHFGS) is the 'HIGH' region element. Zn(2+) is bound by residues C110, C112, Y124, and C128. L-glutamate-binding residues include Y181 and R199. The 'KMSKS' region motif lies at 237–241 (KLSKQ). K240 serves as a coordination point for ATP.

The protein belongs to the class-I aminoacyl-tRNA synthetase family. GluQ subfamily. Zn(2+) serves as cofactor.

Its function is as follows. Catalyzes the tRNA-independent activation of glutamate in presence of ATP and the subsequent transfer of glutamate onto a tRNA(Asp). Glutamate is transferred on the 2-amino-5-(4,5-dihydroxy-2-cyclopenten-1-yl) moiety of the queuosine in the wobble position of the QUC anticodon. The chain is Glutamyl-Q tRNA(Asp) synthetase from Shewanella oneidensis (strain ATCC 700550 / JCM 31522 / CIP 106686 / LMG 19005 / NCIMB 14063 / MR-1).